The primary structure comprises 382 residues: Alkanesulfonate monooxygenase (382 aa).

This sequence belongs to the SsuD family. In terms of assembly, homotetramer.

The enzyme catalyses an alkanesulfonate + FMNH2 + O2 = an aldehyde + FMN + sulfite + H2O + 2 H(+). Functionally, catalyzes the desulfonation of aliphatic sulfonates. In Buttiauxella sp. (strain PNBS), this protein is Alkanesulfonate monooxygenase.